The sequence spans 603 residues: Protein Spindly (603 aa).

Met-1 carries the post-translational modification N-acetylmethionine. The stretch at 1–442 (MESDVIADLR…LKLKYEPEEK (442 aa)) forms a coiled coil. 2 positions are modified to phosphoserine: Ser-513 and Ser-553. The disordered stretch occupies residues 542 to 577 (ALSERSRNTPNSPRLAAESRLQREVKQGKETASKLE). Over residues 561–577 (RLQREVKQGKETASKLE) the composition is skewed to basic and acidic residues.

This sequence belongs to the Spindly family. Interacts with KNTC1 and ZW10. These interactions appear weak and may be transient or indirect. Interacts with dynein intermediate chain and dynactin (DCTN1). Interacts with the catalytically active form of USP45. Post-translationally, monoubiquitinated with'Lys-48' linkage. Deubiquitinated by USP45.

It is found in the cytoplasm. The protein resides in the cytoskeleton. The protein localises to the microtubule organizing center. Its subcellular location is the centrosome. It localises to the chromosome. It is found in the centromere. The protein resides in the kinetochore. The protein localises to the nucleus. Its subcellular location is the spindle pole. Required for the localization of dynein and dynactin to the mitotic kintochore. Dynein is believed to control the initial lateral interaction between the kinetochore and spindle microtubules and to facilitate the subsequent formation of end-on kinetochore-microtubule attachments mediated by the NDC80 complex. Also required for correct spindle orientation. Does not appear to be required for the removal of spindle assembly checkpoint (SAC) proteins from the kinetochore upon bipolar spindle attachment. Acts as an adapter protein linking the dynein motor complex to various cargos and converts dynein from a non-processive to a highly processive motor in the presence of dynactin. Facilitates the interaction between dynein and dynactin and activates dynein processivity (the ability to move along a microtubule for a long distance without falling off the track). Plays a role in cell migration. The protein is Protein Spindly of Bos taurus (Bovine).